The primary structure comprises 416 residues: Glutamyl-tRNA reductase (416 aa).

Substrate is bound by residues threonine 49–arginine 52, serine 105, glutamate 110–glutamine 112, and glutamine 116. Catalysis depends on cysteine 50, which acts as the Nucleophile. Glycine 185–isoleucine 190 contacts NADP(+).

This sequence belongs to the glutamyl-tRNA reductase family. Homodimer.

It catalyses the reaction (S)-4-amino-5-oxopentanoate + tRNA(Glu) + NADP(+) = L-glutamyl-tRNA(Glu) + NADPH + H(+). Its pathway is porphyrin-containing compound metabolism; protoporphyrin-IX biosynthesis; 5-aminolevulinate from L-glutamyl-tRNA(Glu): step 1/2. Its function is as follows. Catalyzes the NADPH-dependent reduction of glutamyl-tRNA(Glu) to glutamate 1-semialdehyde (GSA). In Shewanella loihica (strain ATCC BAA-1088 / PV-4), this protein is Glutamyl-tRNA reductase.